We begin with the raw amino-acid sequence, 713 residues long: Methionine--tRNA ligase (713 aa).

The 'HIGH' region signature appears at 31–41 (PYANGSIHLGH). Zn(2+) contacts are provided by Cys162, Cys165, Cys175, and Cys178. The 'KMSKS' region motif lies at 348–352 (KMSKS). ATP is bound at residue Lys351. The tRNA-binding domain occupies 609 to 713 (DFAKIDLRIV…DGAKAGMRVK (105 aa)).

This sequence belongs to the class-I aminoacyl-tRNA synthetase family. MetG type 1 subfamily. As to quaternary structure, homodimer. Zn(2+) serves as cofactor.

It is found in the cytoplasm. It carries out the reaction tRNA(Met) + L-methionine + ATP = L-methionyl-tRNA(Met) + AMP + diphosphate. Is required not only for elongation of protein synthesis but also for the initiation of all mRNA translation through initiator tRNA(fMet) aminoacylation. This chain is Methionine--tRNA ligase, found in Colwellia psychrerythraea (strain 34H / ATCC BAA-681) (Vibrio psychroerythus).